The chain runs to 2517 residues: Non-reducing polyketide synthase pkbA (2517 aa).

An N-terminal acylcarrier protein transacylase domain (SAT) region spans residues 59-250; the sequence is LERVAGPAEK…KRFDLRGRFH (192 aa). The Ketosynthase family 3 (KS3) domain occupies 380 to 775; that stretch reads SEPIAIIGMG…SANTVSSLKE (396 aa). Catalysis depends on for beta-ketoacyl synthase activity residues Cys547, His682, and His721. Residues 849–1158 are malonyl-CoA:ACP transacylase (MAT) domain; that stretch reads AFGGQVARSV…TGTAALADAT (310 aa). Ser935 serves as the catalytic For acyl/malonyl transferase activity. The N-terminal hotdog fold stretch occupies residues 1221 to 1353; sequence EEFLTFVKYK…GTVVLRENDT (133 aa). In terms of domain architecture, PKS/mFAS DH spans 1221–1530; that stretch reads EEFLTFVKYK…FTRVQISSLG (310 aa). The segment at 1251-1525 is product template (PT) domain; the sequence is FVKGHAVLAE…ILGAHFTRVQ (275 aa). His1255 serves as the catalytic Proton acceptor; for dehydratase activity. The tract at residues 1379–1530 is C-terminal hotdog fold; it reads DCHILQGPVV…FTRVQISSLG (152 aa). Asp1437 acts as the Proton donor; for dehydratase activity in catalysis. A Carrier 1 domain is found at 1574–1651; that stretch reads RPTLEISEKL…SISKCLASYL (78 aa). An O-(pantetheine 4'-phosphoryl)serine modification is found at Ser1611. Positions 1659–1684 are disordered; that stretch reads QPEDLADADSVESDSDMPTGAVTSGI. Over residues 1662–1673 the composition is skewed to acidic residues; sequence DLADADSVESDS. In terms of domain architecture, Carrier 2 spans 1685–1761; that stretch reads TTPDDAVSRL…DLIALVPALN (77 aa). Ser1721 carries the O-(pantetheine 4'-phosphoryl)serine modification. The interval 1976–2075 is methyltransferase (CMeT) domain; the sequence is LELGGGTGGT…IHRMLRPDGF (100 aa). A thioesterase (TE) domain region spans residues 2200–2514; sequence LMIHGGGHIM…RGYDFLKEEV (315 aa).

Pantetheine 4'-phosphate serves as cofactor.

The enzyme catalyses 3 malonyl-CoA + acetyl-CoA + S-adenosyl-L-methionine + H(+) = 3-methylorsellinate + S-adenosyl-L-homocysteine + 3 CO2 + 4 CoA. The protein operates within phytotoxin biosynthesis. Functionally, non-reducing polyketide synthase; part of the gene cluster that mediates the biosynthesis of cichorine, a phytotoxin active against knapweed, corn, and soybeans. The first step in the pathway is performed by the non-reducing polyketide synthase pkbA that condenses one acetyl-CoA starter unit with 3 malonyl-CoA units. PkbA also catalyzes one methylation step to produce 3-methylorsellinate. The nonribosomal peptide synthase-like protein cicB, the cytochrome P450 monooxygenase cicH and the O-methyltransferase cicE are involved in the conversion of 3-methylorsellinate into nidulol. CicB converts 3-methylorsellinate to a yet unidentified intermediate, cicH may play a ring-closing role for cichorine and cicE is plausibly responsible for the methylation of one of the phenol groups. The oxidoreductase cicC acts downstream with still unidentified enzymes to further convert nidulol into cichorin. This is Non-reducing polyketide synthase pkbA from Emericella nidulans (strain FGSC A4 / ATCC 38163 / CBS 112.46 / NRRL 194 / M139) (Aspergillus nidulans).